A 491-amino-acid polypeptide reads, in one-letter code: Glycogen synthase (491 aa).

Arg-20 serves as a coordination point for ADP-alpha-D-glucose.

The protein belongs to the glycosyltransferase 1 family. Bacterial/plant glycogen synthase subfamily.

The catalysed reaction is [(1-&gt;4)-alpha-D-glucosyl](n) + ADP-alpha-D-glucose = [(1-&gt;4)-alpha-D-glucosyl](n+1) + ADP + H(+). Its pathway is glycan biosynthesis; glycogen biosynthesis. Functionally, synthesizes alpha-1,4-glucan chains using ADP-glucose. The chain is Glycogen synthase from Prosthecochloris aestuarii (strain DSM 271 / SK 413).